The following is a 1884-amino-acid chain: Fatty acid synthase subunit alpha (1884 aa).

A disordered region spans residues 91 to 141 (TPDPAEPPAAEEPKAETGKESAPAASAAAAAATQPAAAVAPPPQSAGPVES). The segment covering 111–129 (SAPAASAAAAAATQPAAAV) has biased composition (low complexity). In terms of domain architecture, Carrier spans 147 to 222 (VKASLLIHVL…EQFQDTFSGS (76 aa)). O-(pantetheine 4'-phosphoryl)serine is present on Ser-182. The interval 583 to 613 (TEQTTQDALAIPTGSNTPTEEDELSTASDDD) is disordered. Over residues 584–600 (EQTTQDALAIPTGSNTP) the composition is skewed to polar residues. A compositionally biased stretch (acidic residues) spans 601-613 (TEEDELSTASDDD). The segment at 677–873 (DKYVLVTGAG…CGAIIGWTRG (197 aa)) is beta-ketoacyl reductase. The region spanning 1120-1660 (IQEVVIQHDL…QKGAQAVVVH (541 aa)) is the Ketosynthase family 3 (KS3) domain. Active-site for beta-ketoacyl synthase activity residues include Cys-1303, His-1545, and His-1586. Positions 1770, 1771, and 1772 each coordinate Mg(2+). Residues 1770 to 1772 (DVE), Tyr-1796, Ser-1806, 1815 to 1825 (EATFKALGVSS), 1839 to 1842 (RDGN), and 1869 to 1871 (ISH) each bind acetyl-CoA. Mg(2+) is bound by residues Ser-1870 and His-1871.

Belongs to the thiolase-like superfamily. Fungal fatty acid synthetase subunit alpha family. In terms of assembly, fatty acid synthase is composed of alpha and beta subunits.

The enzyme catalyses acetyl-CoA + n malonyl-CoA + 2n NADPH + 4n H(+) = a long-chain-acyl-CoA + n CoA + n CO2 + 2n NADP(+).. The catalysed reaction is a fatty acyl-[ACP] + malonyl-[ACP] + H(+) = a 3-oxoacyl-[ACP] + holo-[ACP] + CO2. It catalyses the reaction a (3R)-hydroxyacyl-[ACP] + NADP(+) = a 3-oxoacyl-[ACP] + NADPH + H(+). Functionally, fatty acid synthetase catalyzes the formation of long-chain fatty acids from acetyl-CoA, malonyl-CoA and NADPH. The alpha subunit contains domains for: acyl carrier protein, 3-oxoacyl-[acyl-carrier-protein] reductase, and 3-oxoacyl-[acyl-carrier-protein] synthase. The polypeptide is Fatty acid synthase subunit alpha (FAS2) (Candida parapsilosis (strain CDC 317 / ATCC MYA-4646) (Yeast)).